A 339-amino-acid chain; its full sequence is D-erythrose-4-phosphate dehydrogenase (339 aa).

NAD(+) contacts are provided by residues 12 to 13 and Arg81; that span reads RI. Residues 154-156, Arg200, 213-214, and Arg236 each bind substrate; these read SCT and TK. Residue Cys155 is the Nucleophile of the active site. An NAD(+)-binding site is contributed by Asn318.

It belongs to the glyceraldehyde-3-phosphate dehydrogenase family. Epd subfamily. As to quaternary structure, homotetramer.

It is found in the cytoplasm. It carries out the reaction D-erythrose 4-phosphate + NAD(+) + H2O = 4-phospho-D-erythronate + NADH + 2 H(+). It participates in cofactor biosynthesis; pyridoxine 5'-phosphate biosynthesis; pyridoxine 5'-phosphate from D-erythrose 4-phosphate: step 1/5. In terms of biological role, catalyzes the NAD-dependent conversion of D-erythrose 4-phosphate to 4-phosphoerythronate. This Escherichia coli O45:K1 (strain S88 / ExPEC) protein is D-erythrose-4-phosphate dehydrogenase.